A 349-amino-acid polypeptide reads, in one-letter code: Aspartate-semialdehyde dehydrogenase (349 aa).

NADP(+)-binding positions include 12–15 (TGSV) and 39–40 (NS). Arginine 113 is a phosphate binding site. The Acyl-thioester intermediate role is filled by cysteine 148. Glutamine 175 serves as a coordination point for substrate. 178–179 (SG) is a binding site for NADP(+). Glutamate 201 contributes to the substrate binding site. Residue lysine 204 coordinates phosphate. A substrate-binding site is contributed by arginine 234. The Proton acceptor role is filled by histidine 241. 326–327 (NT) lines the NADP(+) pocket.

The protein belongs to the aspartate-semialdehyde dehydrogenase family. As to quaternary structure, homodimer.

It carries out the reaction L-aspartate 4-semialdehyde + phosphate + NADP(+) = 4-phospho-L-aspartate + NADPH + H(+). Its pathway is amino-acid biosynthesis; L-lysine biosynthesis via DAP pathway; (S)-tetrahydrodipicolinate from L-aspartate: step 2/4. It participates in amino-acid biosynthesis; L-methionine biosynthesis via de novo pathway; L-homoserine from L-aspartate: step 2/3. It functions in the pathway amino-acid biosynthesis; L-threonine biosynthesis; L-threonine from L-aspartate: step 2/5. In terms of biological role, catalyzes the NADPH-dependent formation of L-aspartate-semialdehyde (L-ASA) by the reductive dephosphorylation of L-aspartyl-4-phosphate. This is Aspartate-semialdehyde dehydrogenase from Leptospira interrogans serogroup Icterohaemorrhagiae serovar Lai (strain 56601).